The following is a 358-amino-acid chain: Peptide chain release factor 1 (358 aa).

Gln-233 carries the N5-methylglutamine modification.

The protein belongs to the prokaryotic/mitochondrial release factor family. Post-translationally, methylated by PrmC. Methylation increases the termination efficiency of RF1.

The protein localises to the cytoplasm. Peptide chain release factor 1 directs the termination of translation in response to the peptide chain termination codons UAG and UAA. This is Peptide chain release factor 1 from Clostridium botulinum (strain Okra / Type B1).